A 298-amino-acid polypeptide reads, in one-letter code: N-acetylmuramic acid 6-phosphate etherase (298 aa).

The region spanning Ile55–Lys218 is the SIS domain. The active-site Proton donor is the Glu83. Residue Glu114 is part of the active site.

Belongs to the GCKR-like family. MurNAc-6-P etherase subfamily. As to quaternary structure, homodimer.

It carries out the reaction N-acetyl-D-muramate 6-phosphate + H2O = N-acetyl-D-glucosamine 6-phosphate + (R)-lactate. It functions in the pathway amino-sugar metabolism; 1,6-anhydro-N-acetylmuramate degradation. Its pathway is amino-sugar metabolism; N-acetylmuramate degradation. It participates in cell wall biogenesis; peptidoglycan recycling. Functionally, specifically catalyzes the cleavage of the D-lactyl ether substituent of MurNAc 6-phosphate, producing GlcNAc 6-phosphate and D-lactate. Together with AnmK, is also required for the utilization of anhydro-N-acetylmuramic acid (anhMurNAc) either imported from the medium or derived from its own cell wall murein, and thus plays a role in cell wall recycling. This Escherichia coli O127:H6 (strain E2348/69 / EPEC) protein is N-acetylmuramic acid 6-phosphate etherase.